The chain runs to 97 residues: Translation initiation factor 1A (97 aa).

In terms of domain architecture, S1-like spans 8-82 (IRVRLPDRKK…DRADIVWRYT (75 aa)).

It belongs to the eIF-1A family.

Its function is as follows. Seems to be required for maximal rate of protein biosynthesis. Enhances ribosome dissociation into subunits and stabilizes the binding of the initiator Met-tRNA(I) to 40 S ribosomal subunits. This is Translation initiation factor 1A (eIF1A) from Archaeoglobus fulgidus (strain ATCC 49558 / DSM 4304 / JCM 9628 / NBRC 100126 / VC-16).